The primary structure comprises 276 residues: Large ribosomal subunit protein uL2 (276 aa).

The interval 223–276 (GSAMNPVDHPHGGGEGKAPIGHPGPLTPWGKPTLGYKTRKKNKPSDKFIVKRRK) is disordered. Positions 265–276 (KPSDKFIVKRRK) are enriched in basic and acidic residues.

It belongs to the universal ribosomal protein uL2 family. As to quaternary structure, part of the 50S ribosomal subunit. Forms a bridge to the 30S subunit in the 70S ribosome.

In terms of biological role, one of the primary rRNA binding proteins. Required for association of the 30S and 50S subunits to form the 70S ribosome, for tRNA binding and peptide bond formation. It has been suggested to have peptidyltransferase activity; this is somewhat controversial. Makes several contacts with the 16S rRNA in the 70S ribosome. This chain is Large ribosomal subunit protein uL2, found in Caldicellulosiruptor saccharolyticus (strain ATCC 43494 / DSM 8903 / Tp8T 6331).